The following is a 238-amino-acid chain: Lytic polysaccharide monooxygenase NCU01050 (238 aa).

A signal peptide spans 1–15; sequence MKVLAPLVLASAASA. Histidine 16 provides a ligand contact to Cu(2+). Glutamate 45 provides a ligand contact to O2. 2 disulfide bridges follow: cysteine 54–cysteine 186 and cysteine 156–cysteine 238. Asparagine 75 carries N-linked (GlcNAc...) asparagine glycosylation. A Cu(2+)-binding site is contributed by histidine 99. Histidine 172 and glutamine 181 together coordinate O2. Histidine 172 functions as the Proton donor in the catalytic mechanism. A Cu(2+)-binding site is contributed by tyrosine 183.

It belongs to the polysaccharide monooxygenase AA9 family. Monomer. Cu(2+) serves as cofactor. N-linked glycans containing mannose and N-acetylglucosamine.

The protein resides in the secreted. The catalysed reaction is [(1-&gt;4)-beta-D-glucosyl]n+m + reduced acceptor + O2 = 4-dehydro-beta-D-glucosyl-[(1-&gt;4)-beta-D-glucosyl]n-1 + [(1-&gt;4)-beta-D-glucosyl]m + acceptor + H2O.. It participates in glycan metabolism; cellulose degradation. Its activity is regulated as follows. Inhibited by increasing levels of ascorbic acid. Functionally, catalyzes the oxidative cleavage of glycosidic bonds in cellulosic substrates via a copper-dependent mechanism. In the presence of an exogenous reductant ascorbic acid, degrades phosphoric acid swollen cellulose (PASC) to cello-oligosaccharides and 4-ketoaldoses, the end products oxidized at the non-reducing end. Somewhat active toward tamarind xyloglucan and konjac glucomannan, with improved activity with glucomannan in the presence of PASC. H(2)O(2) is able to substitute for O(2) in reactions with PASC, xyloglucan and glucomannan. Very weak activity on cellopentaose. No activity with birchwood xylan or ivory nut mannan. Disrupts plant cell wall polysaccharide substrates, such as recalcitrant crystalline cellulose. The chain is Lytic polysaccharide monooxygenase NCU01050 from Neurospora crassa (strain ATCC 24698 / 74-OR23-1A / CBS 708.71 / DSM 1257 / FGSC 987).